A 257-amino-acid chain; its full sequence is High affinity immunoglobulin epsilon receptor subunit alpha (257 aa).

A signal peptide spans methionine 1 to alanine 25. Residues valine 26–glutamine 205 are Extracellular-facing. 2 Ig-like domains span residues proline 30–serine 110 and aspartate 111–threonine 193. 7 N-linked (GlcNAc...) asparagine glycosylation sites follow: asparagine 46, asparagine 67, asparagine 75, asparagine 99, asparagine 160, asparagine 165, and asparagine 191. The cysteines at positions 51 and 93 are disulfide-linked. Cysteine 132 and cysteine 176 are oxidised to a cystine. Residues phenylalanine 206 to isoleucine 224 form a helical membrane-spanning segment. Residues serine 225–asparagine 257 are Cytoplasmic-facing.

Tetramer of an alpha chain, a beta chain, and two disulfide linked gamma chains. Interacts with IGHE (via CH3 region). Expressed in eosinophils.

The protein localises to the cell membrane. High-affinity receptor for immunoglobulin epsilon/IgE. Mediates IgE effector functions in myeloid cells. Upon IgE binding and antigen/allergen cross-linking initiates signaling pathways that lead to myeloid cell activation and differentiation. On mast cells, basophils and eosinophils stimulates the secretion of vasoactive amines, lipid mediators and cytokines that contribute to inflammatory response, tissue remodeling and cytotoxicity against microbes. Triggers the immediate hypersensitivity response to allergens as a host defense mechanism against helminth parasites, pathogenic bacteria and venom toxicity. When dysregulated, it can elicit harmful life-threatening allergic and anaphylactic reactions. The polypeptide is High affinity immunoglobulin epsilon receptor subunit alpha (FCER1A) (Homo sapiens (Human)).